Here is a 93-residue protein sequence, read N- to C-terminus: Em protein H5 (93 aa).

Positions 1–93 (MASGQQERSE…IDESKFKTKS (93 aa)) are disordered. Basic and acidic residues-rich tracts occupy residues 7–19 (ERSE…REGE), 32–62 (EAQE…EMGR), and 73–93 (GGER…KTKS).

Belongs to the small hydrophilic plant seed protein family.

In terms of biological role, it is thought to provide protection for the cytoplasm during the desiccation stage of embryo development. The polypeptide is Em protein H5 (EMH5) (Triticum aestivum (Wheat)).